The sequence spans 535 residues: Beta-amylase 1, chloroplastic (535 aa).

A chloroplast-targeting transit peptide spans 1 to 36 (MALNLAQSAAAAACFATAGDARRAASVVAMPSSSSS). Positions 115, 155, and 163 each coordinate substrate. Glu247 (proton donor) is an active-site residue. The substrate site is built by Lys361, His366, and Thr408. Residue Glu446 is the Proton acceptor of the active site. Residues 447 to 448 (NA) and Arg480 contribute to the substrate site.

Belongs to the glycosyl hydrolase 14 family.

It is found in the plastid. The protein resides in the chloroplast. The enzyme catalyses Hydrolysis of (1-&gt;4)-alpha-D-glucosidic linkages in polysaccharides so as to remove successive maltose units from the non-reducing ends of the chains.. Possesses beta-amylase activity in vitro. May be involved in cold resistance by mediating the accumulation of maltose upon freezing stress, thus contributing to the protection of membranes. This Oryza sativa subsp. japonica (Rice) protein is Beta-amylase 1, chloroplastic.